A 148-amino-acid polypeptide reads, in one-letter code: Large ribosomal subunit protein bL9 (148 aa).

Belongs to the bacterial ribosomal protein bL9 family.

Functionally, binds to the 23S rRNA. This Stutzerimonas stutzeri (strain A1501) (Pseudomonas stutzeri) protein is Large ribosomal subunit protein bL9.